A 476-amino-acid polypeptide reads, in one-letter code: Cyclase-associated protein 1 (476 aa).

Disordered regions lie at residues 224–262 and 277–319; these read KPAS…KQGM and GLRK…PPKM. Residues 231-243 are compositionally biased toward pro residues; sequence KGPPGAPAPPPAP. Residues 246 to 256 show a composition bias toward low complexity; sequence SAESSKPSSSS. Positions 280–293 are enriched in basic and acidic residues; that stretch reads KVTDDMKTKNRADR. A C-CAP/cofactor C-like domain is found at 316 to 453; it reads PPKMELQMGR…PDGDWVEHAL (138 aa).

This sequence belongs to the CAP family. In terms of tissue distribution, expressed in roots, cotyledons, leaves, stems, flowers, pollen and shoots. Not detected in siliques.

Functionally, actin monomer binding protein that accelerates the exchange of ADP for ATP. Regulates the pool of unpolymerized ATP-actin. Key intermediate between actin-depolymerizing factor (ADF)-mediated disassembly and the profilin-based nucleation and elongation machinery. The sequence is that of Cyclase-associated protein 1 (CAP1) from Arabidopsis thaliana (Mouse-ear cress).